Reading from the N-terminus, the 69-residue chain is uncharacterized protein (69 aa).

2 helical membrane passes run 15-35 (LIIG…ICYV) and 36-56 (LYII…IPKT).

The protein localises to the cell membrane. This is an uncharacterized protein from Methanocaldococcus jannaschii (strain ATCC 43067 / DSM 2661 / JAL-1 / JCM 10045 / NBRC 100440) (Methanococcus jannaschii).